A 461-amino-acid polypeptide reads, in one-letter code: Protein-serine O-palmitoleoyltransferase porcupine (461 aa).

Residues 1-17 (MATFSRQEFFQQLLQGC) are Cytoplasmic-facing. The helical transmembrane segment at 18 to 38 (LLPTVQQGLDQIWLLLTICFA) threads the bilayer. The Extracellular segment spans residues 39 to 66 (CRLLWRLGLPSYLKHASTVAGGFFSLYH). Residues 67–87 (FFQLHMVWVVLLSLLCYLVLF) form a helical membrane-spanning segment. Residues 88–95 (LCRHSSHR) are Cytoplasmic-facing. Residues 96–116 (GVFLSVTILIYLLMGEMHMVD) traverse the membrane as a helical segment. Residues 117–152 (TVTWHKMRGAQMIVAMKAVSLGFDLDRGEVGAVPSP) are Extracellular-facing. Residues 153 to 173 (VEFMGYLYFVGTIVFGPWISF) form a helical membrane-spanning segment. The Cytoplasmic segment spans residues 174-198 (HSYLQAVQGRPLSRRWLKKVARSLA). A helical membrane pass occupies residues 199–219 (LALLCLVLSTCVGPYLFPYFI). The Extracellular portion of the chain corresponds to 220 to 252 (PLDGDRLLRNKKRKARGTMVRWLRAYESAVSFH). The helical transmembrane segment at 253–273 (FSNYFVGFLSEATATLAGAGF) threads the bilayer. Residues 274-337 (TEEKDHLEWD…SAVLVTYAAS (64 aa)) are Cytoplasmic-facing. The helical transmembrane segment at 338–358 (ALLHGFSFHLAAVLLSLAFIT) threads the bilayer. The active site involves H341. Residues 359-396 (YVEHVLRKRLAQILSACILSKRCLPDCSHRHRLGLGVR) lie on the Extracellular side of the membrane. The chain crosses the membrane as a helical span at residues 397–417 (ALNLLFGALAIFHLSYLGSLF). The Cytoplasmic portion of the chain corresponds to 418–461 (DVDVDDTTEEQGYGMAYTVHKWSELSWASHWVTFGCWIFYRLIG).

It belongs to the membrane-bound acyltransferase family. Porcupine subfamily. Interacts with WNT1, WNT3, WNT3A, WNT4, WNT5A, WNT5B, WNT6, WNT7A and WNT7B. Expressed in brain, heart, kidney, liver, lung, muscle, spleen and testis. Isoform 4 is strongly expressed in kidney, liver, lung, spleen and testis. Isoform 1 is strongly expressed in brain, heart and muscle and poorly in kidney, liver, lung, spleen and testis.

Its subcellular location is the endoplasmic reticulum membrane. The catalysed reaction is [Wnt protein]-L-serine + (9Z)-hexadecenoyl-CoA = [Wnt protein]-O-(9Z)-hexadecenoyl-L-serine + CoA. Protein-serine O-palmitoleoyltransferase that acts as a key regulator of the Wnt signaling pathway by mediating the attachment of palmitoleate, a 16-carbon monounsaturated fatty acid (C16:1(9Z)), to Wnt proteins. Serine palmitoleoylation of WNT proteins is required for efficient binding to frizzled receptors. In Mus musculus (Mouse), this protein is Protein-serine O-palmitoleoyltransferase porcupine.